The following is a 901-amino-acid chain: HTH-type transcriptional regulator MalT (901 aa).

39–46 (SPAGYGKT) contacts ATP. An HTH luxR-type domain is found at 829 to 894 (ELIRTSPLTQ…DAVQHAQQLL (66 aa)). Residues 853–872 (NEQIAGELEVAATTIKTHIR) constitute a DNA-binding region (H-T-H motif).

It belongs to the MalT family. In terms of assembly, monomer in solution. Oligomerizes to an active state in the presence of the positive effectors ATP and maltotriose.

Activated by ATP and maltotriose, which are both required for DNA binding. Its function is as follows. Positively regulates the transcription of the maltose regulon whose gene products are responsible for uptake and catabolism of malto-oligosaccharides. Specifically binds to the promoter region of its target genes, recognizing a short DNA motif called the MalT box. This chain is HTH-type transcriptional regulator MalT, found in Escherichia coli (strain K12 / MC4100 / BW2952).